Reading from the N-terminus, the 237-residue chain is Ribosomally synthesized cyclic peptide ustiloxin B precursosr (237 aa).

The N-terminal stretch at M1 to A19 is a signal peptide. 2 consecutive propeptides follow at residues A20–R22 and H234–H237.

UstA is processed by the subtilisin-like endoprotease kex2 that is outside the ustiloxin B gene cluster, at the C-terminal side of Arg-Lys, after transfer to Golgi apparatus through the endoplasmic reticulum (ER). Cleavage by kex2 generates 16 peptides YAIG-I to YAIG-XVI. To process the precursor peptide further, at least two peptidases are necessary to cleave the N-terminal and C-terminal sides of the Tyr-Ala-Ile-Gly core peptide which serves as backbone for the synthesis of ustiloxin B, through cyclization and modification of the tyrosine. One of the two peptidases must be the serine peptidase ustP; and the other pepdidase is probably ustH. Macrocyclization of the core peptide derived from ustA requires the tyrosinase ustQ, as well as the homologous oxidases ustYa and ustYb, and leads to the production of the first cyclization product N-desmethylustiloxin F. For the formation of N-desmethylustiloxin F, three oxidation steps are required, hydroxylation at the benzylic position, hydroxylation at either the aromatic ring of Tyr or beta-position of Ile, and oxidative cyclization. UstQ may catalyze the oxidation of a phenol moiety, whereas the ustYa and ustYb are most likely responsible for the remaining two-step oxidations. N-desmethylustiloxin F is then methylated by ustM to yield ustiloxin F which in turn substrate of the cytochrome P450 monooxygenase ustC which catalyzes the formation of S-deoxyustiloxin H. The flavoprotein monooxygenases ustF1 and ustF2 then participate in the modification of the side chain of S-deoxyustiloxin H, leading to the synthesis of an oxime intermediate, via ustiloxin H. Finally, carboxylative dehydration performed by the cysteine desulfurase-like protein ustD yields ustiloxin B.

It participates in mycotoxin biosynthesis. Functionally, ribosomally synthesized cyclic peptide ustiloxin B precursor: Part of the gene cluster that mediates the biosynthesis of the secondary metabolite ustiloxin B, an antimitotic tetrapeptide. The ustA translated product contains a 16-fold repeated peptide embedding the tetrapeptide Tyr-Ala-Ile-Gly, that is converted into the cyclic moiety of ustiloxin B. The sequence is that of Ribosomally synthesized cyclic peptide ustiloxin B precursosr from Aspergillus flavus (strain ATCC 200026 / FGSC A1120 / IAM 13836 / NRRL 3357 / JCM 12722 / SRRC 167).